The primary structure comprises 65 residues: Large ribosomal subunit protein bL35 (65 aa).

The protein belongs to the bacterial ribosomal protein bL35 family.

The sequence is that of Large ribosomal subunit protein bL35 from Nitrosomonas eutropha (strain DSM 101675 / C91 / Nm57).